The primary structure comprises 261 residues: Putative cytochrome YdhU (261 aa).

A helical transmembrane segment spans residues 25-45 (FWPVWLIIAGVLLVGMWLVLG). Heme b is bound at residue His77. A run of 3 helical transmembrane segments spans residues 81 to 101 (ALLF…MVGA), 108 to 128 (VAVH…FVLI), and 182 to 202 (VAYV…GLLC). His111 is a heme b binding site. Heme b contacts are provided by His223 and His237. A helical membrane pass occupies residues 224 to 244 (FALAFISLFFIFGHLYLCTTG). His237 is a binding site for a menaquinone.

This sequence belongs to the PhsC family. Requires heme as cofactor.

The protein resides in the cell inner membrane. The chain is Putative cytochrome YdhU (ydhU) from Escherichia coli (strain K12).